We begin with the raw amino-acid sequence, 274 residues long: Bis(5'-nucleosyl)-tetraphosphatase, symmetrical (274 aa).

The protein belongs to the Ap4A hydrolase family.

It carries out the reaction P(1),P(4)-bis(5'-adenosyl) tetraphosphate + H2O = 2 ADP + 2 H(+). In terms of biological role, hydrolyzes diadenosine 5',5'''-P1,P4-tetraphosphate to yield ADP. The sequence is that of Bis(5'-nucleosyl)-tetraphosphatase, symmetrical from Shewanella sp. (strain W3-18-1).